The primary structure comprises 399 residues: Succinate--CoA ligase [ADP-forming] subunit beta (399 aa).

Residues 9–254 enclose the ATP-grasp domain; the sequence is KAVLAEFGAP…ESEEDPKEIE (246 aa). ATP is bound by residues Lys46, 53–55, Glu109, Ala112, and Glu117; that span reads GRG. Positions 209 and 223 each coordinate Mg(2+). Residues Asn274 and 331–333 contribute to the substrate site; that span reads GIM.

Belongs to the succinate/malate CoA ligase beta subunit family. In terms of assembly, heterotetramer of two alpha and two beta subunits. Mg(2+) is required as a cofactor.

It carries out the reaction succinate + ATP + CoA = succinyl-CoA + ADP + phosphate. It catalyses the reaction GTP + succinate + CoA = succinyl-CoA + GDP + phosphate. It participates in carbohydrate metabolism; tricarboxylic acid cycle; succinate from succinyl-CoA (ligase route): step 1/1. Succinyl-CoA synthetase functions in the citric acid cycle (TCA), coupling the hydrolysis of succinyl-CoA to the synthesis of either ATP or GTP and thus represents the only step of substrate-level phosphorylation in the TCA. The beta subunit provides nucleotide specificity of the enzyme and binds the substrate succinate, while the binding sites for coenzyme A and phosphate are found in the alpha subunit. The polypeptide is Succinate--CoA ligase [ADP-forming] subunit beta (Caulobacter sp. (strain K31)).